A 101-amino-acid chain; its full sequence is Small ribosomal subunit protein uS14 (101 aa).

This sequence belongs to the universal ribosomal protein uS14 family. As to quaternary structure, part of the 30S ribosomal subunit. Contacts proteins S3 and S10.

In terms of biological role, binds 16S rRNA, required for the assembly of 30S particles and may also be responsible for determining the conformation of the 16S rRNA at the A site. The polypeptide is Small ribosomal subunit protein uS14 (Chlamydia pneumoniae (Chlamydophila pneumoniae)).